The primary structure comprises 539 residues: GMP synthase [glutamine-hydrolyzing] (539 aa).

Residues 4–202 (KVLILDFGSQ…VLEIAGAKPD (199 aa)) form the Glutamine amidotransferase type-1 domain. Cysteine 81 acts as the Nucleophile in catalysis. Active-site residues include histidine 176 and glutamate 178. The 193-residue stretch at 203–395 (WVMRDHIDEA…LGLPHEMVYR (193 aa)) folds into the GMPS ATP-PPase domain. 230 to 236 (SGGVDSS) is an ATP binding site.

Homodimer.

It catalyses the reaction XMP + L-glutamine + ATP + H2O = GMP + L-glutamate + AMP + diphosphate + 2 H(+). It functions in the pathway purine metabolism; GMP biosynthesis; GMP from XMP (L-Gln route): step 1/1. Its function is as follows. Catalyzes the synthesis of GMP from XMP. This chain is GMP synthase [glutamine-hydrolyzing], found in Ralstonia pickettii (strain 12J).